Here is a 522-residue protein sequence, read N- to C-terminus: Na(+)/H(+) antiporter NhaB (522 aa).

Helical transmembrane passes span 25 to 45 (VFLVINPFIFWFHPFIAGWLL), 49 to 69 (FIFTLAMALKCYPLQPGGMLA), 87 to 107 (ILANFEVILLLMFMVAGIYFM), 128 to 162 (LSLAFCLTAAFLSAFLDALTVIAVIISVAMGFYGV), 201 to 221 (LMMHAAVGTALGGVMTLVGEP), 237 to 257 (FFFRMSPVTLLTLISGVVTCI), 302 to 322 (VFVGIWLIIGLAFHLASVGLI), 356 to 376 (LVVFFSVVAVIIDQHLFAPVI), 388 to 408 (LLLFYIFNGVLSAISDNVFVA), 446 to 466 (ATPNGQAAFLFLLTSSISPLI), and 476 to 496 (MALPYTIVLSIVGLLAVEYVL).

The protein belongs to the NhaB Na(+)/H(+) (TC 2.A.34) antiporter family.

Its subcellular location is the cell inner membrane. The catalysed reaction is 2 Na(+)(in) + 3 H(+)(out) = 2 Na(+)(out) + 3 H(+)(in). Na(+)/H(+) antiporter that extrudes sodium in exchange for external protons. The sequence is that of Na(+)/H(+) antiporter NhaB from Actinobacillus succinogenes (strain ATCC 55618 / DSM 22257 / CCUG 43843 / 130Z).